The chain runs to 178 residues: Membrane-spanning protein YciB (178 aa).

Helical transmembrane passes span 22–42 (IFIA…ITSI), 52–72 (LINL…HNSS), 76–96 (WKVT…YLFI), 121–141 (LFWS…ILYF), and 151–171 (IFGL…YIYF).

The protein belongs to the YciB family.

The protein localises to the cell membrane. Its function is as follows. Plays a role in cell envelope biogenesis, maintenance of cell envelope integrity and membrane homeostasis. This Buchnera aphidicola subsp. Baizongia pistaciae (strain Bp) protein is Membrane-spanning protein YciB.